Consider the following 712-residue polypeptide: Zinc finger and BTB domain-containing protein 39 (712 aa).

A BTB domain is found at 30–96 (CDVTIVVGSR…VYTSELFTDL (67 aa)). Disordered stretches follow at residues 129-162 (ARAKPLTSTSESHSGTLSCPSAEPAHPLGELRGG), 176-224 (SDAG…IPSM), and 236-260 (GIQTSTSSCQPYKVQSNGDFSKNSF). Residues 134 to 147 (LTSTSESHSGTLSC) are compositionally biased toward polar residues. Lys183 is covalently cross-linked (Glycyl lysine isopeptide (Lys-Gly) (interchain with G-Cter in SUMO2)). The C2H2-type 1 zinc-finger motif lies at 372–394 (GNCKVCETHFQDRNSRVTHVLSH). Residues 400–422 (FSCDMCETKFFTQWQLTLHRRDG) form a C2H2-type 2; atypical zinc finger. A Glycyl lysine isopeptide (Lys-Gly) (interchain with G-Cter in SUMO2) cross-link involves residue Lys439. Residues 480–502 (QACSVCDQRHLNLCSLMWHTLSH) form a C2H2-type 3; atypical zinc finger. 4 C2H2-type zinc fingers span residues 508-530 (FSCSVCANSFVDWHLLEKHMAVH), 538-560 (FHCRLCSQSFKSEAAYRYHVSQH), 605-627 (YSCKVCGKRFAHTSEFNYHRRIH), and 633-655 (YQCKVCHKFFRGRSTIKCHLKTH). The segment at 661 to 683 (YRCTVCGHYSSTLNLMSKHVGVH) adopts a C2H2-type 8; atypical zinc-finger fold.

It belongs to the krueppel C2H2-type zinc-finger protein family.

The protein localises to the nucleus. Its function is as follows. May be involved in transcriptional regulation. The chain is Zinc finger and BTB domain-containing protein 39 (ZBTB39) from Homo sapiens (Human).